Here is a 101-residue protein sequence, read N- to C-terminus: Large ribosomal subunit protein bL21 (101 aa).

This sequence belongs to the bacterial ribosomal protein bL21 family. As to quaternary structure, part of the 50S ribosomal subunit. Contacts protein L20.

Functionally, this protein binds to 23S rRNA in the presence of protein L20. In Magnetococcus marinus (strain ATCC BAA-1437 / JCM 17883 / MC-1), this protein is Large ribosomal subunit protein bL21.